The sequence spans 298 residues: MQEYRLVLVTGPSGAGRTTAINALEDMGYEVIDNLPLSFVPRLIEGPSIGRPIALGLDVRNRDFNATALIELIDRLTQDPRVALEVLYVDCSASELIRRYNQTRRRHPLAPAETPAEGVEREIDLLAPVRVRADHLIDTSEMSPHDLKAELSRWFDRGAATRLAVSVQSFSYKRGVPRGVDMIFDCRFLKNPYWVESLRALDGREASVADYISSDPRFAPFFEKLRDLVLFLLPAQLEEGKAHLSLGFGCTGGQHRSVAVAELLGNALAEAGWPVSKRHRELERRAAAVLPTHQGEKA.

11–18 (GPSGAGRT) serves as a coordination point for ATP. GTP is bound at residue 58 to 61 (DVRN).

The protein belongs to the RapZ-like family.

Functionally, displays ATPase and GTPase activities. This is Nucleotide-binding protein RSKD131_3085 from Cereibacter sphaeroides (strain KD131 / KCTC 12085) (Rhodobacter sphaeroides).